A 481-amino-acid chain; its full sequence is Sphingosine kinase 2 (481 aa).

One can recognise a DAGKc domain in the interval 111–253; the sequence is GRPKRLLVFV…VDVATIAQGN (143 aa). Residues 121–123 and Thr153 contribute to the ATP site; that span reads NPF. A substrate-binding site is contributed by 178 to 181; sequence SGDG. Asp180 serves as the catalytic Proton donor/acceptor. ATP is bound by residues Glu185 and 210 to 212; that span reads GTG. Residue Asp271 participates in substrate binding. Residues Arg278, Arg284, and 441–443 each bind ATP; that span reads DGE.

Requires Mg(2+) as cofactor. As to expression, highly expressed in flowers and siliques and at lower levels in roots, leaves and stems.

It is found in the vacuole membrane. It catalyses the reaction a sphingoid base + ATP = a sphingoid 1-phosphate + ADP + H(+). With respect to regulation, activated by phosphatidic acid (PA). Binding with PA stimulates the activity by promoting the binding of substrate to the catalytic site. Involved in the production of sphingolipid metabolites. Phosphorylates sphingosine and various l sphingoid long-chain base (LCB) products, such as phytosphingosine (PHS, 4-hydroxysphinganine), 4-hydroxy-8-sphingenine, 4,8-sphingadienine and D-erythro-dihydrosphingosine, but has a very few activity toward D,L-threo- dihydrosphingosine. Is required for abscisic acid (ABA) signaling that mediates stomatal closure, inhibition of seed germination and root elongation. May function upstream of PLDALPHA1 and phosphatidic acid (PA) in an amplification response to ABA that mediates stomatal closure. In Arabidopsis thaliana (Mouse-ear cress), this protein is Sphingosine kinase 2 (SPHK2).